We begin with the raw amino-acid sequence, 1025 residues long: Dihydropyrimidine dehydrogenase [NADP(+)] (1025 aa).

Positions Met-1 to Pro-3 are excised as a propeptide. The 4Fe-4S ferredoxin-type 1 domain occupies Glu-69–Phe-100. [4Fe-4S] cluster contacts are provided by Cys-79, Cys-82, Cys-87, and Cys-91. Val-129 contributes to the FAD binding site. [4Fe-4S] cluster-binding residues include Cys-130, Cys-136, Cys-140, and Gln-156. FAD-binding positions include Gly-194–Ala-198, Glu-218–Leu-226, Arg-235, and Leu-261. NADP(+)-binding positions include Ala-340–Thr-343, Arg-364–Lys-365, and Arg-371. Lys-384 carries the post-translational modification N6-acetyllysine. Residues Ala-437–Gly-439 and Asp-481–Asn-487 contribute to the NADP(+) site. Residue Gly-480–Thr-489 coordinates FAD. Residues Ser-550 and Lys-574–Thr-575 each bind FMN. Substrate-binding positions include Asn-609 and Asn-668–Ser-670. The active-site Proton acceptor is the Cys-671. Lys-709 lines the FMN pocket. Substrate is bound at residue Asn-736–Thr-737. FMN-binding positions include Gly-767, Thr-793–Gly-795, and Cys-816–Ser-817. 4Fe-4S ferredoxin-type domains follow at residues Val-944 to Glu-976 and His-978 to Arg-1007. Residues Cys-953, Cys-956, Cys-959, Cys-963, Cys-986, Cys-989, Cys-992, and Cys-996 each coordinate [4Fe-4S] cluster.

The protein belongs to the dihydropyrimidine dehydrogenase family. Homodimer. The cofactor is FAD. It depends on FMN as a cofactor. [4Fe-4S] cluster serves as cofactor.

The protein localises to the cytoplasm. It carries out the reaction 5,6-dihydrouracil + NADP(+) = uracil + NADPH + H(+). The catalysed reaction is 5,6-dihydrothymine + NADP(+) = thymine + NADPH + H(+). The protein operates within amino-acid biosynthesis; beta-alanine biosynthesis. Its activity is regulated as follows. Inactivated by 5-iodouracil. Its function is as follows. Involved in pyrimidine base degradation. Catalyzes the reduction of uracil and thymine. In Sus scrofa (Pig), this protein is Dihydropyrimidine dehydrogenase [NADP(+)] (DPYD).